The primary structure comprises 428 residues: UDP-N-acetylglucosamine 1-carboxyvinyltransferase 2 (428 aa).

Residue 22 to 23 coordinates phosphoenolpyruvate; that stretch reads KN. Arg-92 contributes to the UDP-N-acetyl-alpha-D-glucosamine binding site. Cys-116 acts as the Proton donor in catalysis. 2-(S-cysteinyl)pyruvic acid O-phosphothioketal is present on Cys-116. UDP-N-acetyl-alpha-D-glucosamine contacts are provided by residues 121–125, Asp-304, and Ile-326; that span reads RPIDQ.

The protein belongs to the EPSP synthase family. MurA subfamily.

The protein localises to the cytoplasm. The enzyme catalyses phosphoenolpyruvate + UDP-N-acetyl-alpha-D-glucosamine = UDP-N-acetyl-3-O-(1-carboxyvinyl)-alpha-D-glucosamine + phosphate. It functions in the pathway cell wall biogenesis; peptidoglycan biosynthesis. In terms of biological role, cell wall formation. Adds enolpyruvyl to UDP-N-acetylglucosamine. The protein is UDP-N-acetylglucosamine 1-carboxyvinyltransferase 2 of Oceanobacillus iheyensis (strain DSM 14371 / CIP 107618 / JCM 11309 / KCTC 3954 / HTE831).